A 499-amino-acid polypeptide reads, in one-letter code: Putative protein phosphatase 2C 76 (499 aa).

Residues Met-1–Gly-34 form the signal peptide. A disordered region spans residues Ala-67 to Arg-101. One can recognise a PPM-type phosphatase domain in the interval Gly-92–Leu-457. 2 residues coordinate Mn(2+): Asp-138 and Gly-139. The disordered stretch occupies residues Lys-286–Asp-306. 2 residues coordinate Mn(2+): Asp-397 and Asp-448.

The protein belongs to the PP2C family. Mg(2+) is required as a cofactor. Requires Mn(2+) as cofactor.

The enzyme catalyses O-phospho-L-seryl-[protein] + H2O = L-seryl-[protein] + phosphate. It catalyses the reaction O-phospho-L-threonyl-[protein] + H2O = L-threonyl-[protein] + phosphate. This is Putative protein phosphatase 2C 76 from Oryza sativa subsp. japonica (Rice).